Reading from the N-terminus, the 609-residue chain is DNA mismatch repair protein MutL (609 aa).

A disordered region spans residues 364-386; that stretch reads SVNSKPTDYRPAMSPSFKSTPNT.

Belongs to the DNA mismatch repair MutL/HexB family.

Its function is as follows. This protein is involved in the repair of mismatches in DNA. It is required for dam-dependent methyl-directed DNA mismatch repair. May act as a 'molecular matchmaker', a protein that promotes the formation of a stable complex between two or more DNA-binding proteins in an ATP-dependent manner without itself being part of a final effector complex. The polypeptide is DNA mismatch repair protein MutL (Rickettsia akari (strain Hartford)).